The following is a 279-amino-acid chain: Large ribosomal subunit protein uL2 (279 aa).

Disordered stretches follow at residues 1 to 43 (MGIK…TAGR) and 207 to 279 (KAGR…PGKH). Positions 8–22 (PTTNGRRNMTASDFS) are enriched in polar residues. Residues 23 to 33 (EITKTKPEKSL) show a composition bias toward basic and acidic residues. The segment covering 34–43 (LDSQSHTAGR) has biased composition (polar residues). 2 stretches are compositionally biased toward basic residues: residues 209–219 (GRTRWQGKRPT) and 254–279 (TLGKKTRNKKARSNKLIVRGRRPGKH).

This sequence belongs to the universal ribosomal protein uL2 family. In terms of assembly, part of the 50S ribosomal subunit. Forms a bridge to the 30S subunit in the 70S ribosome.

One of the primary rRNA binding proteins. Required for association of the 30S and 50S subunits to form the 70S ribosome, for tRNA binding and peptide bond formation. It has been suggested to have peptidyltransferase activity; this is somewhat controversial. Makes several contacts with the 16S rRNA in the 70S ribosome. The sequence is that of Large ribosomal subunit protein uL2 from Lactiplantibacillus plantarum (strain ATCC BAA-793 / NCIMB 8826 / WCFS1) (Lactobacillus plantarum).